The sequence spans 352 residues: tRNA-specific 2-thiouridylase MnmA (352 aa).

ATP is bound by residues 6 to 13 and Leu-32; that span reads AMSGGVDS. Residue Cys-101 is the Nucleophile of the active site. Residues Cys-101 and Cys-194 are joined by a disulfide bond. Gly-125 provides a ligand contact to ATP. Residues 144 to 146 form an interaction with tRNA region; it reads KDQ. Catalysis depends on Cys-194, which acts as the Cysteine persulfide intermediate.

It belongs to the MnmA/TRMU family.

It is found in the cytoplasm. It carries out the reaction S-sulfanyl-L-cysteinyl-[protein] + uridine(34) in tRNA + AH2 + ATP = 2-thiouridine(34) in tRNA + L-cysteinyl-[protein] + A + AMP + diphosphate + H(+). Catalyzes the 2-thiolation of uridine at the wobble position (U34) of tRNA, leading to the formation of s(2)U34. The polypeptide is tRNA-specific 2-thiouridylase MnmA (Frankia casuarinae (strain DSM 45818 / CECT 9043 / HFP020203 / CcI3)).